Here is a 751-residue protein sequence, read N- to C-terminus: ABC transporter G family member 22 (751 aa).

A disordered region spans residues 26–81 (ADIRSPHGSMDANGVPATAPAAVGGGGTLSRKSSRRLMGMSPGRSSGAGTHIRKSR). The region spanning 157–403 (LKFRDVTYKV…FSSIGCSPLI (247 aa)) is the ABC transporter domain. 197 to 204 (GPSGSGKT) is an ATP binding site. In terms of domain architecture, ABC transmembrane type-2 spans 498 to 707 (EQYCILFCRG…TYKLLLKVQY (210 aa)). Helical transmembrane passes span 516 to 536 (FSWL…LLWW), 552 to 572 (LLFF…IFAF), 602 to 622 (LPLD…MTGL), 634 to 654 (LTVF…GAIL), 666 to 686 (VTVM…PVFI), and 722 to 742 (GLTE…LAYL).

The protein belongs to the ABC transporter superfamily. ABCG family. Eye pigment precursor importer (TC 3.A.1.204) subfamily.

Its subcellular location is the membrane. This chain is ABC transporter G family member 22 (ABCG22), found in Arabidopsis thaliana (Mouse-ear cress).